A 494-amino-acid polypeptide reads, in one-letter code: MTSADGQKDLQSYMDAVTAMLKLPPSDRRNWYRNGFIHLMDCPHGDWWFTSWHRGYLGYFEETCRELSGNPDFALPYWDWTANPEVLPPLFGTILDPVNSSAYIPDHNRFQDIMQEPIKAYWDSLSPAQLQQQNLRGYPDFDALWSDAMASFANQPNARFLTAQNPKLNPATQTAVDIDTIKASLAPTTFANDAGAPGLAFNSPVSSSHQVAPVGFSILEGQPHNRVHMSVGGQSAPYGLMSQNLSPLDPIFFLHHCNIDRLWDVWTRKQQAMGLPVGPTADQQTQYDPEPYLFYVNADGSPVSDKTRAADYLEIGDFDYDYDPGSGEEVIPVATAGRSAPIPALEAAVSASAAVAINKPATAKLTVSQELVDVAAKPSEQSRQFAKVSIAPPMDVGGLNFLVFISPEGTTPDLNPDGPDFAGSFEFFGVRHHHTDTVSFTIPIDKALDRLIDDGRLKAGEPIDFAVVVAQEGKRVEGSMPAKAQLTDIQVGSF.

6 residues coordinate Cu cation: His38, His53, Cys64, His224, His228, and His256.

It belongs to the tyrosinase family. Cu(2+) is required as a cofactor.

The catalysed reaction is 2 L-dopa + O2 = 2 L-dopaquinone + 2 H2O. The enzyme catalyses L-tyrosine + O2 = L-dopaquinone + H2O. This is Tyrosinase (mepA) from Rhizobium meliloti (Ensifer meliloti).